Consider the following 379-residue polypeptide: 2-dehydropantoate 2-reductase (379 aa).

Residues 13–18 (GLGAMG) and Asn-119 contribute to the NADP(+) site. Residue Asn-119 participates in substrate binding. The active-site Proton donor is the Lys-224. Substrate is bound by residues Asn-228, Asn-232, and Ser-316. Glu-328 lines the NADP(+) pocket.

It belongs to the ketopantoate reductase family.

The catalysed reaction is (R)-pantoate + NADP(+) = 2-dehydropantoate + NADPH + H(+). The protein operates within cofactor biosynthesis; (R)-pantothenate biosynthesis; (R)-pantoate from 3-methyl-2-oxobutanoate: step 2/2. Functionally, catalyzes the NADPH-dependent reduction of ketopantoate into pantoic acid. This is 2-dehydropantoate 2-reductase (PAN5) from Saccharomyces cerevisiae (strain ATCC 204508 / S288c) (Baker's yeast).